The sequence spans 543 residues: Limonene hydroxylase (543 aa).

A Sigma-54 factor interaction domain is found at 232-464 (VVTYNPSFEK…LRNVIERAFL (233 aa)). ATP-binding positions include 260–267 (GETGSGKE) and 324–333 (ADGGTLFLDE).

The catalysed reaction is (4S)-limonene + reduced [NADPH--hemoprotein reductase] + O2 = (1S,5R)-carveol + oxidized [NADPH--hemoprotein reductase] + H2O + H(+). It catalyses the reaction (4S)-limonene + reduced [NADPH--hemoprotein reductase] + O2 = (4S)-perillyl alcohol + oxidized [NADPH--hemoprotein reductase] + H2O + H(+). It carries out the reaction perillyl alcohol + NAD(+) = perillyl aldehyde + NADH + H(+). The enzyme catalyses (1S,5R)-carveol + NADP(+) = (R)-carvone + NADPH + H(+). Involved in limonene hydroxylation to a mixture of carveol and perillyl alcohol as well as in dehydrogenation of these products to carvone and perillyl aldehyde. Aromatic alcohols containing an isopropyl or isopropenyl group at ring position 4 also served as substrates for the dehydrogenase activity. In Geobacillus stearothermophilus (Bacillus stearothermophilus), this protein is Limonene hydroxylase.